The following is a 257-amino-acid chain: Ribonuclease HII (257 aa).

Residues 71–257 (ELIAGIDEVG…EPIKSMVNFK (187 aa)) form the RNase H type-2 domain. 3 residues coordinate a divalent metal cation: aspartate 77, glutamate 78, and aspartate 169.

The protein belongs to the RNase HII family. Mn(2+) serves as cofactor. The cofactor is Mg(2+).

The protein localises to the cytoplasm. It catalyses the reaction Endonucleolytic cleavage to 5'-phosphomonoester.. Endonuclease that specifically degrades the RNA of RNA-DNA hybrids. The sequence is that of Ribonuclease HII (rnhB) from Lactococcus lactis subsp. cremoris (strain MG1363).